A 71-amino-acid polypeptide reads, in one-letter code: Heat-stable enterotoxin A (71 aa).

A signal peptide spans Met-1–Gly-19. A propeptide spanning residues Gln-20 to Val-53 is cleaved from the precursor. Disulfide bonds link Cys-59–Cys-64, Cys-60–Cys-68, and Cys-63–Cys-71.

It belongs to the heat-stable enterotoxin family.

Its subcellular location is the secreted. In terms of biological role, toxin which activates the particulate form of guanylate cyclase and increases cyclic GMP levels within the host intestinal epithelial cells. The sequence is that of Heat-stable enterotoxin A (ystA) from Yersinia enterocolitica.